The chain runs to 240 residues: RNA polymerase sigma factor SigI (240 aa).

Positions 56–69 (DEYSIGLFAFNEAI) match the Polymerase core binding motif. Residues 194 to 213 (LKHIEPRVRVSRKTLERHRK) constitute a DNA-binding region (H-T-H motif).

This sequence belongs to the sigma-70 factor family. SigI subfamily. In terms of assembly, interacts with RsgI.

It localises to the cytoplasm. Negatively regulated by the anti-sigma-I factor RsgI. Its function is as follows. Sigma factors are initiation factors that promote the attachment of RNA polymerase to specific initiation sites and are then released. This sigma factor contributes to both stress response and virulence gene expression. The chain is RNA polymerase sigma factor SigI from Bacillus anthracis.